The following is a 510-amino-acid chain: Inositol-3-phosphate synthase (510 aa).

Residues Gly70, Gly71, Asn72, Asn73, Asp143, Ile180, Gln190, Arg193, Thr230, Ala231, Asn232, Thr233, Gly281, Ser282, Asp306, Ser309, Asn340, Asn341, Asp342, Lys355, Gly393, Asp394, Asp422, and Ser423 each coordinate NAD(+).

This sequence belongs to the myo-inositol 1-phosphate synthase family. It depends on NAD(+) as a cofactor.

Its subcellular location is the cytoplasm. It is found in the cytosol. The protein localises to the nucleus. It catalyses the reaction D-glucose 6-phosphate = 1D-myo-inositol 3-phosphate. It functions in the pathway polyol metabolism; myo-inositol biosynthesis; myo-inositol from D-glucose 6-phosphate: step 1/2. Functionally, key enzyme in myo-inositol biosynthesis pathway that catalyzes the conversion of glucose 6-phosphate to 1-myo-inositol 1-phosphate in a NAD-dependent manner. This Nicotiana paniculata protein is Inositol-3-phosphate synthase (INPS1).